A 591-amino-acid polypeptide reads, in one-letter code: L-fucose isomerase (591 aa).

Residues Glu-337 and Asp-361 each act as proton acceptor in the active site. 3 residues coordinate Mn(2+): Glu-337, Asp-361, and His-528.

The protein belongs to the L-fucose isomerase family. Homohexamer. Mn(2+) is required as a cofactor.

It localises to the cytoplasm. It catalyses the reaction L-fucose = L-fuculose. Its pathway is carbohydrate degradation; L-fucose degradation; L-lactaldehyde and glycerone phosphate from L-fucose: step 1/3. Converts the aldose L-fucose into the corresponding ketose L-fuculose. In Escherichia coli O157:H7 (strain EC4115 / EHEC), this protein is L-fucose isomerase.